The chain runs to 95 residues: Ascorbate-specific PTS system EIIB component (95 aa).

Residues 1–95 form the PTS EIIB type-2 domain; it reads MENKNLHIIA…EIKQALSKVL (95 aa). Catalysis depends on Cys-12, which acts as the Phosphocysteine intermediate. Residue Cys-12 is modified to Phosphocysteine.

It is found in the cytoplasm. It catalyses the reaction N(pros)-phospho-L-histidyl-[protein] + L-ascorbate(out) = L-ascorbate 6-phosphate(in) + L-histidyl-[protein]. In terms of biological role, the phosphoenolpyruvate-dependent sugar phosphotransferase system (sugar PTS), a major carbohydrate active transport system, catalyzes the phosphorylation of incoming sugar substrates concomitantly with their translocation across the cell membrane. The enzyme II UlaABC PTS system is involved in ascorbate transport. This chain is Ascorbate-specific PTS system EIIB component (ulaB), found in Mycoplasma pneumoniae (strain ATCC 29342 / M129 / Subtype 1) (Mycoplasmoides pneumoniae).